Here is a 305-residue protein sequence, read N- to C-terminus: tRNA dimethylallyltransferase (305 aa).

14-21 (GPTASGKT) provides a ligand contact to ATP. Position 16 to 21 (16 to 21 (TASGKT)) interacts with substrate. Interaction with substrate tRNA stretches follow at residues 39 to 42 (DSAL), 163 to 167 (QRIIR), and 243 to 248 (RCVGYR).

Belongs to the IPP transferase family. In terms of assembly, monomer. The cofactor is Mg(2+).

It catalyses the reaction adenosine(37) in tRNA + dimethylallyl diphosphate = N(6)-dimethylallyladenosine(37) in tRNA + diphosphate. Functionally, catalyzes the transfer of a dimethylallyl group onto the adenine at position 37 in tRNAs that read codons beginning with uridine, leading to the formation of N6-(dimethylallyl)adenosine (i(6)A). The polypeptide is tRNA dimethylallyltransferase (Vesicomyosocius okutanii subsp. Calyptogena okutanii (strain HA)).